We begin with the raw amino-acid sequence, 902 residues long: 4-hydroxyphenylacetate decarboxylase glycyl radical subunit (902 aa).

Positions Lys-38–Leu-774 constitute a PFL domain. 2 residues coordinate 4-hydroxyphenylacetate: Ser-348 and Cys-507. Catalysis depends on Cys-507, which acts as the Cysteine radical intermediate. Glu-509 functions as the Proton donor in the catalytic mechanism. Residues His-540 and Glu-641 each coordinate 4-hydroxyphenylacetate. The region spanning Gly-782–Val-902 is the Glycine radical domain. The residue at position 877 (Gly-877) is a Glycine radical.

The protein belongs to the glycyl radical enzyme (GRE) family. HPAD subfamily. As to quaternary structure, heterooctamer consisting of 4 large (HpdB) subunits and 4 small (HpdC) subunits, arranged as a tetramer of heterodimers. Also forms a catalytically inactive homodimer. In terms of processing, requires the activating protein CsdA to generate the key active site glycyl radical that is involved in catalysis. Post-translationally, phosphorylated on serine. Phosphorylation may trigger the formation of the active heterooctamers and thereby regulates enzyme activity.

The catalysed reaction is 4-hydroxyphenylacetate + H(+) = 4-methylphenol + CO2. It catalyses the reaction 3,4-dihydroxyphenylacetate + H(+) = 4-methylcatechol + CO2. Functionally, glycyl radical subunit of the HPA decarboxylase that decarboxylates phenylacetates with a hydroxyl group in the p-position. Active toward 4-hydroxyphenylacetate and 3,4-dihydroxyphenylacetate, forming 4-methylphenol and 4-methylcatechol, respectively. Is likely involved in the catabolism of aromatic amino acids such as tyrosine fermentation. 4-methylphenol (p-cresol) formation provides metabolic toxicity, which allows an active suppression of other microbes and may provide growth advantages for the producers in highly competitive environments. The large subunit is the catalytic subunit that binds the substrate. The sequence is that of 4-hydroxyphenylacetate decarboxylase glycyl radical subunit from Clostridioides difficile (strain CD196) (Peptoclostridium difficile).